The primary structure comprises 447 residues: Voltage-gated purine nucleotide uniporter SLC17A9 (447 aa).

A disordered region spans residues 1–26 (MPSQRSSLMQPIPEETRKTPSAAAED). A run of 11 helical transmembrane segments spans residues 40-60 (ILLL…VCTV), 74-94 (GIVL…GGHL), 103-123 (VILL…LLAH), 129-149 (LAFL…YFPA), 169-189 (TVGA…SVLL), 192-212 (CGWQ…AYYV), 252-272 (VWAA…LLSW), 287-307 (WVFN…SGFI), 327-347 (VMGL…TSFL), 380-400 (GFLF…GVCL), and 413-433 (CVFH…LVFG).

The protein belongs to the major facilitator superfamily. Sodium/anion cotransporter family. In terms of tissue distribution, in brain, specifically expressed in the medulla and is associated with chromaffin granules (at protein level). Predominantly expressed in adrenal gland, brain and thyroid.

The protein resides in the cytoplasmic vesicle. Its subcellular location is the secretory vesicle. The protein localises to the chromaffin granule membrane. It is found in the secretory vesicle membrane. It localises to the lysosome membrane. The enzyme catalyses ATP(in) = ATP(out). It carries out the reaction ADP(in) = ADP(out). The catalysed reaction is GTP(in) = GTP(out). Activity is chloride-dependent. In terms of biological role, voltage-gated ATP nucleotide uniporter that can also transport the purine nucleotides ADP and GTP. Uses the membrane potential as the driving force to control ATP accumulation in lysosomes and secretory vesicles. By controlling ATP storage in lysosomes, regulates ATP-dependent proteins of these organelles. Also indirectly regulates the exocytosis of ATP through its import into lysosomes in astrocytes and secretory vesicles such as adrenal chromaffin granules, mucin granules and synaptic vesicles. The polypeptide is Voltage-gated purine nucleotide uniporter SLC17A9 (Mus musculus (Mouse)).